The primary structure comprises 360 residues: Peptide chain release factor 1 (360 aa).

The residue at position 237 (Gln237) is an N5-methylglutamine.

It belongs to the prokaryotic/mitochondrial release factor family. In terms of processing, methylated by PrmC. Methylation increases the termination efficiency of RF1.

It is found in the cytoplasm. Peptide chain release factor 1 directs the termination of translation in response to the peptide chain termination codons UAG and UAA. The sequence is that of Peptide chain release factor 1 from Teredinibacter turnerae (strain ATCC 39867 / T7901).